A 211-amino-acid polypeptide reads, in one-letter code: Protein-methionine-sulfoxide reductase heme-binding subunit MsrQ (211 aa).

5 helical membrane-spanning segments follow: residues 8 to 28 (VIWL…WLVW), 54 to 74 (FLLA…PLLI), 82 to 102 (LWCF…ELGV), 116 to 136 (PYLT…FTST), and 153 to 173 (FVYL…KIIS).

This sequence belongs to the MsrQ family. In terms of assembly, heterodimer of a catalytic subunit (MsrP) and a heme-binding subunit (MsrQ). The cofactor is FMN. Requires heme b as cofactor.

It is found in the cell inner membrane. Part of the MsrPQ system that repairs oxidized periplasmic proteins containing methionine sulfoxide residues (Met-O), using respiratory chain electrons. Thus protects these proteins from oxidative-stress damage caused by reactive species of oxygen and chlorine generated by the host defense mechanisms. MsrPQ is essential for the maintenance of envelope integrity under bleach stress, rescuing a wide series of structurally unrelated periplasmic proteins from methionine oxidation, including the primary periplasmic chaperone SurA and the lipoprotein Pal. MsrQ provides electrons for reduction to the reductase catalytic subunit MsrP, using the quinone pool of the respiratory chain. This chain is Protein-methionine-sulfoxide reductase heme-binding subunit MsrQ, found in Escherichia coli O6:K15:H31 (strain 536 / UPEC).